A 338-amino-acid polypeptide reads, in one-letter code: Tryptophan--tRNA ligase (338 aa).

ATP-binding positions include 11–13 (QPS) and 19–20 (GN). Positions 12–20 (PSGELSIGN) match the 'HIGH' region motif. Aspartate 135 is a binding site for L-tryptophan. Residues 147–149 (GSD), valine 189, and 198–202 (KMSKS) each bind ATP. Positions 198-202 (KMSKS) match the 'KMSKS' region motif.

The protein belongs to the class-I aminoacyl-tRNA synthetase family. As to quaternary structure, homodimer.

It is found in the cytoplasm. The catalysed reaction is tRNA(Trp) + L-tryptophan + ATP = L-tryptophyl-tRNA(Trp) + AMP + diphosphate + H(+). In terms of biological role, catalyzes the attachment of tryptophan to tRNA(Trp). The polypeptide is Tryptophan--tRNA ligase (Vibrio cholerae serotype O1 (strain ATCC 39315 / El Tor Inaba N16961)).